Here is a 1377-residue protein sequence, read N- to C-terminus: DNA-directed RNA polymerase subunit beta (1377 aa).

Belongs to the RNA polymerase beta chain family. The RNAP catalytic core consists of 2 alpha, 1 beta, 1 beta' and 1 omega subunit. When a sigma factor is associated with the core the holoenzyme is formed, which can initiate transcription.

The catalysed reaction is RNA(n) + a ribonucleoside 5'-triphosphate = RNA(n+1) + diphosphate. Its function is as follows. DNA-dependent RNA polymerase catalyzes the transcription of DNA into RNA using the four ribonucleoside triphosphates as substrates. This chain is DNA-directed RNA polymerase subunit beta, found in Azoarcus sp. (strain BH72).